Consider the following 328-residue polypeptide: POU domain, class 5, transcription factor 2 (328 aa).

The segment at 1–25 is disordered; that stretch reads MAGHRPSNHFCPLPGSGGGGPRGPM. The 75-residue stretch at 118–192 folds into the POU-specific domain; it reads DISGILKELQ…LLKKWLKEVE (75 aa). A DNA-binding region (homeobox) is located at residues 210–269; the sequence is GKWRRASRERRIGNSLEKFFQRCPKPTPQQISHIAGCLQLQKDVVRVWFYNRSKMGSRPT.

This sequence belongs to the POU transcription factor family. Class-5 subfamily. Expressed in skeletal and cardiac muscles, brain, heart and lung. Little or no detectable expression found in pancreas, kidney, liver or placenta.

The protein resides in the nucleus. In terms of biological role, transcription factor that binds preferentially to the octamer motif (5'-ATGTTAAT-3'). May exert a regulatory function in meiotic events that are required for terminal differentiation of male germ cell. In Homo sapiens (Human), this protein is POU domain, class 5, transcription factor 2 (POU5F2).